A 407-amino-acid polypeptide reads, in one-letter code: MQDTLAVILAGGMGSRLSPLTDDRAKPAVPFGGKYRIIDFTLTNCLHSGLRRILVLTQYKSHSLHKHLRNGWSIFNPELGEFITVVPPQMRKGGKWYEGTADALFHNMWLLARSDAKYVVVLSGDHIYRMDYAAMLEEHISKNATLTIACMQVPRHEASAFGVMAIDDDSRITCFVEKPADPPCIPNRPDHSLASMGIYIFNMDVLKKALTEDAEIEQSSHDFGKDVIPKLIATGSVFAYSFCSGKGRVARDCYWRDVGTIDSFYDANMDLLQPVPPMNLYQKNWAIRTYEQQYPPARTVSSATGNEGIFINSIIANGVINSGGSVQHSIISSNVRINDSALIVDSILFDDVEVGEGCKLIHCIIDKHVKIPPYTEIGLNPIEDRKRFHISERGVVVVPESYQFSTE.

Alpha-D-glucose 1-phosphate-binding positions include Tyr97, Gly162, 177–178, and Ser195; that span reads EK.

The protein belongs to the bacterial/plant glucose-1-phosphate adenylyltransferase family. Homotetramer.

The catalysed reaction is alpha-D-glucose 1-phosphate + ATP + H(+) = ADP-alpha-D-glucose + diphosphate. It functions in the pathway glycan biosynthesis; glycogen biosynthesis. Its function is as follows. Involved in the biosynthesis of ADP-glucose, a building block required for the elongation reactions to produce glycogen. Catalyzes the reaction between ATP and alpha-D-glucose 1-phosphate (G1P) to produce pyrophosphate and ADP-Glc. The protein is Glucose-1-phosphate adenylyltransferase 2 of Vibrio cholerae serotype O1 (strain ATCC 39315 / El Tor Inaba N16961).